The chain runs to 196 residues: Putative NADH dehydrogenase/NAD(P)H nitroreductase PST_3601 (196 aa).

The protein belongs to the nitroreductase family. HadB/RutE subfamily. Requires FMN as cofactor.

The sequence is that of Putative NADH dehydrogenase/NAD(P)H nitroreductase PST_3601 from Stutzerimonas stutzeri (strain A1501) (Pseudomonas stutzeri).